The sequence spans 124 residues: Large ribosomal subunit protein bL12 (124 aa).

The protein belongs to the bacterial ribosomal protein bL12 family. As to quaternary structure, homodimer. Part of the ribosomal stalk of the 50S ribosomal subunit. Forms a multimeric L10(L12)X complex, where L10 forms an elongated spine to which 2 to 4 L12 dimers bind in a sequential fashion. Binds GTP-bound translation factors.

In terms of biological role, forms part of the ribosomal stalk which helps the ribosome interact with GTP-bound translation factors. Is thus essential for accurate translation. The protein is Large ribosomal subunit protein bL12 of Wolinella succinogenes (strain ATCC 29543 / DSM 1740 / CCUG 13145 / JCM 31913 / LMG 7466 / NCTC 11488 / FDC 602W) (Vibrio succinogenes).